The sequence spans 534 residues: Echilunin cytochrome P450 monooxygenase (534 aa).

The helical transmembrane segment at 18–38 threads the bilayer; it reads VSPAALSWAVVAIYLGTFFWL. Cys-441 contributes to the heme binding site.

The protein belongs to the cytochrome P450 family. Heme is required as a cofactor.

It is found in the membrane. It carries out the reaction preechinulin + reduced [NADPH--hemoprotein reductase] + O2 = neoechinulin A + oxidized [NADPH--hemoprotein reductase] + 2 H2O + H(+). It functions in the pathway secondary metabolite biosynthesis. It participates in alkaloid biosynthesis. Cytochrome P450 monooxygenase; part of the gene cluster that mediates the biosynthesis of echinulin family alkaloid. The pathway begins with the biosynthesis of the cyclic dipeptide cyclo-L-Trp-L-Ala (cyclo-TA) by the NRPS echPS via condensation of L-alanine and L-tryptophan. The prenyltransferase echPT1 then catalyzes the first prenylation step, a reverse prenylation reaction at C2, to yield preechinulin. Preechinulin is the substrate of the cytochrome P450 monooxygenase echP450 that catalyzes the formation of the double bond between C10 and C11 to produce neoechulin A. The unique prenyltransferase echPT2 functions as a competitive enzyme with echP450 for preechinulin metabolization and uses preechinulin for effective regiospecific prenylations. Preechinulin is prenylated by echPT2 at C5 or C7. C7-prenylation leads to accumulation of tardioxopiperazine B without further modification by echPT2. In contrast, the C5-prenylated tardioxopiperazine A can be prenylated again by echPT2, predominantly at C7 to form echinulin or less frequently at C4 to give variecolorin L. EchPT2 also accepts neoechilunin A to produce varlecolorin G (prenylation at C5) or isoechinulin A (prenylation at C7). EchPT2 further converts isoechinulin A into dehydroechinulin. Moreover, a yet unidentified enzyme can also convert neoechilunin A into neoechilunin B by introducing a double bond between positions C14 and C17 and thus provides a further substrate to echPT2 for C5 and C7 prenylation. This Aspergillus ruber (strain CBS 135680) protein is Echilunin cytochrome P450 monooxygenase.